A 397-amino-acid polypeptide reads, in one-letter code: Ribosomal RNA large subunit methyltransferase I (397 aa).

Positions S2–F79 constitute a PUA domain.

The protein belongs to the methyltransferase superfamily. RlmI family.

The protein resides in the cytoplasm. The catalysed reaction is cytidine(1962) in 23S rRNA + S-adenosyl-L-methionine = 5-methylcytidine(1962) in 23S rRNA + S-adenosyl-L-homocysteine + H(+). Specifically methylates the cytosine at position 1962 (m5C1962) of 23S rRNA. In Aeromonas hydrophila subsp. hydrophila (strain ATCC 7966 / DSM 30187 / BCRC 13018 / CCUG 14551 / JCM 1027 / KCTC 2358 / NCIMB 9240 / NCTC 8049), this protein is Ribosomal RNA large subunit methyltransferase I.